The sequence spans 593 residues: NADH-quinone oxidoreductase subunit C/D (593 aa).

Residues 1–184 form an NADH dehydrogenase I subunit C region; it reads MTADSALYIP…DPYSLSAAKQ (184 aa). The tract at residues 208 to 593 is NADH dehydrogenase I subunit D; the sequence is DYMFLNLGPN…IDFVMADVDR (386 aa).

It in the N-terminal section; belongs to the complex I 30 kDa subunit family. This sequence in the C-terminal section; belongs to the complex I 49 kDa subunit family. As to quaternary structure, NDH-1 is composed of 13 different subunits. Subunits NuoB, CD, E, F, and G constitute the peripheral sector of the complex.

It localises to the cell inner membrane. It carries out the reaction a quinone + NADH + 5 H(+)(in) = a quinol + NAD(+) + 4 H(+)(out). NDH-1 shuttles electrons from NADH, via FMN and iron-sulfur (Fe-S) centers, to quinones in the respiratory chain. The immediate electron acceptor for the enzyme in this species is believed to be ubiquinone. Couples the redox reaction to proton translocation (for every two electrons transferred, four hydrogen ions are translocated across the cytoplasmic membrane), and thus conserves the redox energy in a proton gradient. This chain is NADH-quinone oxidoreductase subunit C/D, found in Pseudomonas aeruginosa (strain UCBPP-PA14).